Here is a 360-residue protein sequence, read N- to C-terminus: S-adenosylmethionine:tRNA ribosyltransferase-isomerase (360 aa).

This sequence belongs to the QueA family. As to quaternary structure, monomer.

The protein localises to the cytoplasm. It catalyses the reaction 7-aminomethyl-7-carbaguanosine(34) in tRNA + S-adenosyl-L-methionine = epoxyqueuosine(34) in tRNA + adenine + L-methionine + 2 H(+). It functions in the pathway tRNA modification; tRNA-queuosine biosynthesis. Transfers and isomerizes the ribose moiety from AdoMet to the 7-aminomethyl group of 7-deazaguanine (preQ1-tRNA) to give epoxyqueuosine (oQ-tRNA). In Sinorhizobium medicae (strain WSM419) (Ensifer medicae), this protein is S-adenosylmethionine:tRNA ribosyltransferase-isomerase.